Consider the following 75-residue polypeptide: MYKMYFLKDQKFSLSGTIRINDKTQSEYGSVWCPGLSITGLHHDAIDHNMFEEMETEIIEYLGPWVQAEYRRIKG.

This is an uncharacterized protein from Dryophytes versicolor (chameleon treefrog).